The chain runs to 128 residues: Small ribosomal subunit protein uS11 (128 aa).

This sequence belongs to the universal ribosomal protein uS11 family. As to quaternary structure, part of the 30S ribosomal subunit. Interacts with proteins S7 and S18. Binds to IF-3.

Located on the platform of the 30S subunit, it bridges several disparate RNA helices of the 16S rRNA. Forms part of the Shine-Dalgarno cleft in the 70S ribosome. This is Small ribosomal subunit protein uS11 from Onion yellows phytoplasma (strain OY-M).